An 878-amino-acid chain; its full sequence is NUT family member 2B (878 aa).

6 disordered regions span residues 273 to 324 (WSQG…DDSC), 417 to 512 (QKSQ…PEEI), 527 to 560 (LLGPSLGATGEPEKQREEGKVKQPQEEDWTPPDP), 624 to 693 (PPLK…GMAR), 709 to 757 (LRAA…EEEE), and 775 to 878 (WLPQ…HCSQ). Composition is skewed to pro residues over residues 278-288 (PLPPPPPPAAQ) and 427-444 (CLPPPATPRLEPRGPPAP). Residues 476–487 (TKARRPPPRPHR) show a composition bias toward basic residues. The segment covering 537-551 (EPEKQREEGKVKQPQ) has biased composition (basic and acidic residues).

This sequence belongs to the NUT family.

The chain is NUT family member 2B (NUTM2B) from Homo sapiens (Human).